Here is a 738-residue protein sequence, read N- to C-terminus: Protein Aster-B (738 aa).

The disordered stretch occupies residues 1 to 81; it reads MKGFKLSCTA…SGGKNSKKSQ (81 aa). A compositionally biased stretch (polar residues) spans 8-19; that stretch reads CTASNSNRSTPA. Phosphoserine is present on residues Ser28 and Ser30. Over residues 41 to 51 the composition is skewed to basic and acidic residues; it reads MVEKGSDHSSD. The span at 59–70 shows a compositional bias: low complexity; sequence QGVQRSCSSQSG. Residues 96-163 enclose the GRAM domain; the sequence is EDFRKLFKQL…KDICSMTKEK (68 aa). The interval 254–299 is disordered; that stretch reads EENEVNDSSSKSSIETKPDASPQLPKKSITNSTLTSTGSSEAPVSF. Residues 259–268 show a composition bias toward polar residues; it reads NDSSSKSSIE. Residue Ser274 is modified to Phosphoserine. Residues 281 to 295 are compositionally biased toward polar residues; sequence SITNSTLTSTGSSEA. Positions 372-543 constitute a VASt domain; it reads SGRQYVNEVF…ELTKTESTYL (172 aa). The residue at position 389 (Tyr389) is a Phosphotyrosine. Phosphoserine occurs at positions 550 and 581. Thr584, Thr585, and Thr587 each carry phosphothreonine. Residues 623 to 643 form a helical membrane-spanning segment; the sequence is LLLVISCVICFSLVLLVVLNM.

In terms of tissue distribution, highly expressed in the adrenal gland (at protein level) and brain. Also found in the kidney, testis and macrophages.

The protein localises to the endoplasmic reticulum membrane. Its subcellular location is the cell membrane. In terms of biological role, cholesterol transporter that mediates non-vesicular transport of cholesterol from the plasma membrane (PM) to the endoplasmic reticulum (ER). Contains unique domains for binding cholesterol and the PM, thereby serving as a molecular bridge for the transfer of cholesterol from the PM to the ER. Plays a crucial role in cholesterol homeostasis in the adrenal gland and has the unique ability to localize to the PM based on the level of membrane cholesterol. In lipid-poor conditions localizes to the ER membrane and in response to excess cholesterol in the PM is recruited to the endoplasmic reticulum-plasma membrane contact sites (EPCS) which is mediated by the GRAM domain. At the EPCS, the sterol-binding VASt/ASTER domain binds to the cholesterol in the PM and facilitates its transfer from the PM to ER. The protein is Protein Aster-B (Gramd1b) of Mus musculus (Mouse).